A 664-amino-acid chain; its full sequence is MSPVEPAGIMKKSHRQKSQRLWAKLVMRKWLNISGRDPEYGADTDNESENEDAREDNDDSSSDEEGGSGSRGRESKVYENAEDAIAAASAVVDAAAAAAEFISNDAPMKLRRRNSETLRAQYINNKEIRVCVGTWNVGGISPPSDLDIDDWIEINQPADIYVLGLQEIVPLNAGNILGAEDDRPVAKWEEVIREALNRVRPKLSGVKSYSDPPSPGRFKPFEETHDIIEEEVAFESDSDAGVEIHPIDEEEEEETDRLWALKHDGGVIGEVKTLVDPNTGLPVVEIKRQFSIPKKLDRQLCLRADSFKGISDDDSTQTGMKTINRMLSGKERIGLSWPEPPLNMLGPCVLDRQPSIKTVKSLKTAKSFKAYSSFKSVAGNNNGIPPEVLALAEMDLKLLMERKRRPAYVRLVSKQMVGILLTIWVKRSLRKHIQNVRVSTVGVGVMGYIGNKGAVSVSMSINQTFFCFINTHLTAGEREVDQIKRNADVHEIHKRTVFHSVSALGLPKLIYDHERIIWLGDLNYRLSSSYEKTRDLISKREWSKLLEYDQLVKEYRKGRAFDGWSEGTLHFPPTYKYQANSDEYTANDGKAPKRTPAWCDRVLSYGKGMRLVHYRRTEQKFSDHRPVTAIYMAEVEVFSARKLQRALTFTDAEIEDEGLVAVLV.

The interval 35-76 (GRDPEYGADTDNESENEDAREDNDDSSSDEEGGSGSRGRESK) is disordered. The span at 40 to 66 (YGADTDNESENEDAREDNDDSSSDEEG) shows a compositional bias: acidic residues. Catalytic stretches follow at residues 514 to 529 (ERII…LSSS) and 592 to 607 (PKRT…SYGK).

It belongs to the inositol polyphosphate 5-phosphatase family.

It carries out the reaction a 1,2-diacyl-sn-glycero-3-phospho-(1D-myo-inositol-4,5-bisphosphate) + H2O = a 1,2-diacyl-sn-glycero-3-phospho-(1D-myo-inositol 4-phosphate) + phosphate. It catalyses the reaction a 1,2-diacyl-sn-glycero-3-phospho-(1D-myo-inositol-3,4,5-trisphosphate) + H2O = a 1,2-diacyl-sn-glycero-3-phospho-(1D-myo-inositol-3,4-bisphosphate) + phosphate. In terms of biological role, has phosphatase activity toward PtdIns(4,5)P2 and PtdIns(3,4,5)P3. This Arabidopsis thaliana (Mouse-ear cress) protein is Type IV inositol polyphosphate 5-phosphatase 3.